The primary structure comprises 263 residues: Indole-3-glycerol phosphate synthase (263 aa).

The protein belongs to the TrpC family.

The enzyme catalyses 1-(2-carboxyphenylamino)-1-deoxy-D-ribulose 5-phosphate + H(+) = (1S,2R)-1-C-(indol-3-yl)glycerol 3-phosphate + CO2 + H2O. It participates in amino-acid biosynthesis; L-tryptophan biosynthesis; L-tryptophan from chorismate: step 4/5. This chain is Indole-3-glycerol phosphate synthase, found in Laribacter hongkongensis (strain HLHK9).